The following is an 87-amino-acid chain: Small ribosomal subunit protein bS20 (87 aa).

The tract at residues 1–20 (MANHKSAEKRARQTIKRTER) is disordered.

It belongs to the bacterial ribosomal protein bS20 family.

Binds directly to 16S ribosomal RNA. The sequence is that of Small ribosomal subunit protein bS20 from Campylobacter lari (strain RM2100 / D67 / ATCC BAA-1060).